The primary structure comprises 288 residues: Dysbindin protein homolog (288 aa).

Residues 147–239 (AQLQNSSQVL…QRERQAVFDD (93 aa)) are a coiled coil.

This sequence belongs to the dysbindin family. Component of the biogenesis of lysosome-related organelles complex-1 (BLOC-1) composed of Blos1, Blos2, Blos3, Blos4, Dysb, Muted, Pldn and Snapin. Interacts with Pldn and Snapin.

Its function is as follows. Component of the biogenesis of lysosome-related organelles complex-1 (BLOC-1) involved in pigment granule biogenesis and membrane trafficking in synapses. In response to high synaptic activity at neuromuscular junctions, stabilizes Pldn protein levels and, together with Pldn, plays a role in promoting efficient synaptic vesicle recycling and re-formation through early endosomes. This is Dysbindin protein homolog from Drosophila melanogaster (Fruit fly).